Consider the following 520-residue polypeptide: Dynein axonemal assembly factor 8 (520 aa).

Disordered regions lie at residues proline 93–glutamate 202, arginine 217–proline 256, cysteine 328–glutamine 366, and aspartate 388–leucine 520. The segment covering arginine 111 to arginine 125 has biased composition (basic and acidic residues). At serine 161 the chain carries Phosphoserine. Residue serine 351 is modified to Phosphoserine. Over residues aspartate 401–methionine 410 the composition is skewed to acidic residues. A compositionally biased stretch (polar residues) spans serine 420–glutamine 437.

As to expression, expressed in respiratory ciliated cells (at protein level).

It localises to the dynein axonemal particle. The protein localises to the cytoplasm. In terms of biological role, in cyliated cells, dynein axonemal particle-specific protein required for deployment of ODA to the axoneme. Interacts with outer dynein arm (ODA) subunits. This chain is Dynein axonemal assembly factor 8, found in Homo sapiens (Human).